A 330-amino-acid chain; its full sequence is Protoheme IX farnesyltransferase (330 aa).

Helical transmembrane passes span 33–53 (VMTL…VDAD), 54–74 (PFLA…AGAL), 101–121 (VSNA…LMAL), 126–146 (LAAG…TMIL), 154–174 (IVIG…AATG), 180–200 (AVIL…ALAL), 227–247 (ILLY…TGLG), 250–270 (VYGA…WRIF), and 308–328 (VLFA…IPGV).

The protein belongs to the UbiA prenyltransferase family. Protoheme IX farnesyltransferase subfamily. In terms of assembly, interacts with CtaA.

The protein localises to the cell inner membrane. It catalyses the reaction heme b + (2E,6E)-farnesyl diphosphate + H2O = Fe(II)-heme o + diphosphate. The protein operates within porphyrin-containing compound metabolism; heme O biosynthesis; heme O from protoheme: step 1/1. Its function is as follows. Converts heme B (protoheme IX) to heme O by substitution of the vinyl group on carbon 2 of heme B porphyrin ring with a hydroxyethyl farnesyl side group. This is Protoheme IX farnesyltransferase from Maricaulis maris (strain MCS10) (Caulobacter maris).